The primary structure comprises 122 residues: Biogenesis of lysosome-related organelles complex 1 subunit CNL1 (122 aa).

Residues 1–10 are compositionally biased toward basic and acidic residues; sequence MQDNSSHSRE. A disordered region spans residues 1–21; sequence MQDNSSHSRESASAGDDPLGI. The stretch at 63–95 forms a coiled coil; it reads ENTIDKNIAKFKELLEKCDTLENHYEMLNQLAI.

This sequence belongs to the BLOC1S4 family. Component of the biogenesis of lysosome-related organelles complex-1 (BLOC-1) composed of at least BLI1, BLS1, CNL1, KXD1, SNN1 and VAB2.

It localises to the cytoplasm. Component of the biogenesis of lysosome-related organelles complex-1 (BLOC-1), a complex that is involved in endosomal cargo sorting. In Saccharomyces cerevisiae (strain Lalvin QA23) (Baker's yeast), this protein is Biogenesis of lysosome-related organelles complex 1 subunit CNL1 (CLN1).